Reading from the N-terminus, the 257-residue chain is MSVPLILTILAGAATFIGAFLGVLGQKPSNRLLAFSLGFAAGIMLLISLMEMLPAALAAEGMSPVLGYGMFIFGLLGYFGLDRMLPHAHPQDLMQKSVQLLPKSIKRTAILLTLGISLHNFPEGIATFVTASSNLELGFGIALAVALHNIPEGLAVAGPVYAATGSKRTAILWAGISGLAEILGGVLAWLILGSMISPVVMAAIMAAVAGIMVALSVDELMPLAKEIDPNNNPSYGVLCGMSVMGFSLVLLQTAGIG.

8 helical membrane passes run leucine 5–glycine 25, leucine 32–methionine 52, glycine 61–leucine 81, alanine 109–valine 129, leucine 137–alanine 157, isoleucine 171–isoleucine 191, methionine 195–leucine 215, and glycine 236–isoleucine 256. Residues asparagine 120 and glutamate 123 each contribute to the Fe(2+) site. The Zn(2+) site is built by glutamate 123 and histidine 148. Asparagine 149, glutamate 152, and glutamate 181 together coordinate Fe(2+). Glutamate 152 serves as a coordination point for Zn(2+).

It belongs to the ZIP transporter (TC 2.A.5) family. ZupT subfamily.

Its subcellular location is the cell inner membrane. The catalysed reaction is Zn(2+)(in) = Zn(2+)(out). In terms of biological role, mediates zinc uptake. May also transport other divalent cations. The sequence is that of Zinc transporter ZupT from Shigella flexneri serotype 5b (strain 8401).